The primary structure comprises 282 residues: Pantothenate synthetase (282 aa).

30-37 (MGFLHDGH) contacts ATP. H37 acts as the Proton donor in catalysis. Q60 provides a ligand contact to (R)-pantoate. Q60 is a beta-alanine binding site. 146-149 (GQKD) contributes to the ATP binding site. (R)-pantoate is bound at residue Q152. ATP-binding positions include I175 and 183-186 (KSSR).

This sequence belongs to the pantothenate synthetase family. In terms of assembly, homodimer.

It is found in the cytoplasm. It catalyses the reaction (R)-pantoate + beta-alanine + ATP = (R)-pantothenate + AMP + diphosphate + H(+). It participates in cofactor biosynthesis; (R)-pantothenate biosynthesis; (R)-pantothenate from (R)-pantoate and beta-alanine: step 1/1. Catalyzes the condensation of pantoate with beta-alanine in an ATP-dependent reaction via a pantoyl-adenylate intermediate. This Campylobacter jejuni subsp. doylei (strain ATCC BAA-1458 / RM4099 / 269.97) protein is Pantothenate synthetase.